Consider the following 39-residue polypeptide: Cytochrome b6-f complex subunit 5 (39 aa).

The helical transmembrane segment at 5 to 25 threads the bilayer; sequence LLCGIVLGLVPITLLGLFVSA.

This sequence belongs to the PetG family. The 4 large subunits of the cytochrome b6-f complex are cytochrome b6, subunit IV (17 kDa polypeptide, PetD), cytochrome f and the Rieske protein, while the 4 small subunits are PetG, PetL, PetM and PetN. The complex functions as a dimer.

Its subcellular location is the cellular thylakoid membrane. In terms of biological role, component of the cytochrome b6-f complex, which mediates electron transfer between photosystem II (PSII) and photosystem I (PSI), cyclic electron flow around PSI, and state transitions. PetG is required for either the stability or assembly of the cytochrome b6-f complex. This Prochlorococcus marinus (strain MIT 9515) protein is Cytochrome b6-f complex subunit 5.